The chain runs to 261 residues: Lys-63-specific deubiquitinase BRCC36 (261 aa).

Positions 6 to 149 constitute an MPN domain; it reads VHIQGDAFLV…YTCFQSVQAQ (144 aa). Positions 92, 94, and 105 each coordinate Zn(2+). Positions 92–105 match the JAMM motif motif; that stretch reads HSHPHITVWPSHVD.

This sequence belongs to the peptidase M67A family. BRCC36 subfamily. As to quaternary structure, component of the BRCA1-A complex, at least composed of brca1, bard1, uimc1/rap80, abraxas1, brcc3/brcc36, babam2 and babam1/nba1. In the BRCA1-A complex, interacts directly with abraxas1 and babam2. Component of the BRISC complex, at least composed of abraxas2, brcc3/brcc36, babam2 and babam1/nba1. Within the complex, interacts directly with abraxas2. Both the BRCA1-A complex and the BRISC complex bind polyubiquitin. It depends on Zn(2+) as a cofactor.

It localises to the nucleus. The protein localises to the cytoplasm. It is found in the cytoskeleton. The protein resides in the spindle pole. Metalloprotease that specifically cleaves 'Lys-63'-linked polyubiquitin chains. Does not have activity toward 'Lys-48'-linked polyubiquitin chains. Component of the BRCA1-A complex, a complex that specifically recognizes 'Lys-63'-linked ubiquitinated histones H2A and H2AX at DNA lesions sites, leading to target the brca1-bard1 heterodimer to sites of DNA damage at double-strand breaks (DSBs). In the BRCA1-A complex, it specifically removes 'Lys-63'-linked ubiquitin on histones H2A and H2AX, antagonizing the rnf8-dependent ubiquitination at double-strand breaks (DSBs). Catalytic subunit of the BRISC complex, a multiprotein complex that specifically cleaves 'Lys-63'-linked ubiquitin in various substrates. Mediates the specific 'Lys-63'-specific deubiquitination associated with the COP9 signalosome complex (CSN), via the interaction of the BRISC complex with the CSN complex. The BRISC complex is required for normal mitotic spindle assembly and microtubule attachment to kinetochores via its role in deubiquitinating numa1. Plays a role in interferon signaling via its role in the deubiquitination of the interferon receptor ifnar1; deubiquitination increases ifnar1 activity by enhancing its stability and cell surface expression. Acts as a regulator of the NLRP3 inflammasome by mediating deubiquitination of nlrp3. Down-regulates the response to bacterial lipopolysaccharide (LPS) via its role in ifnar1 deubiquitination. The chain is Lys-63-specific deubiquitinase BRCC36 (brcc3) from Xenopus tropicalis (Western clawed frog).